Consider the following 314-residue polypeptide: Ribosomal RNA small subunit methyltransferase H (314 aa).

Residues 58 to 60 (GGH), D76, F103, D119, and Q126 each bind S-adenosyl-L-methionine.

This sequence belongs to the methyltransferase superfamily. RsmH family.

It localises to the cytoplasm. It carries out the reaction cytidine(1402) in 16S rRNA + S-adenosyl-L-methionine = N(4)-methylcytidine(1402) in 16S rRNA + S-adenosyl-L-homocysteine + H(+). Specifically methylates the N4 position of cytidine in position 1402 (C1402) of 16S rRNA. This chain is Ribosomal RNA small subunit methyltransferase H, found in Gloeobacter violaceus (strain ATCC 29082 / PCC 7421).